Consider the following 616-residue polypeptide: Methylmalonyl-CoA mutase small subunit (616 aa).

This sequence belongs to the methylmalonyl-CoA mutase family. In terms of assembly, heterodimer of an alpha and a beta chain. Adenosylcob(III)alamin is required as a cofactor.

The enzyme catalyses (R)-methylmalonyl-CoA = succinyl-CoA. Its pathway is metabolic intermediate metabolism; propanoyl-CoA degradation; succinyl-CoA from propanoyl-CoA: step 3/3. Functionally, catalyzes the isomerization of succinyl-CoA to methylmalonyl-CoA during synthesis of propionate from tricarboxylic acid-cycle intermediates. This conversion most likely represents an important source of building blocks for polyketide antibiotic biosynthesis. It is unable to catalyze the conversion of isobutyryl-CoA into N-butyryl-CoA. In Streptomyces virginiae (Streptomyces cinnamonensis), this protein is Methylmalonyl-CoA mutase small subunit (mutA).